A 5801-amino-acid chain; its full sequence is uncharacterized protein (5801 aa).

Disordered stretches follow at residues 1114–1136 (DDDNNNSNNNNNNNNNNNNNKKI), 1827–1846 (KDRSSSSSSSYSGGGSSINN), 2040–2109 (NNGE…SPLF), 3351–3392 (EKSN…NNSG), 5134–5168 (DNNNNNNNNNNNNNNNNNNNIDHGDDNNDGESESD), 5478–5573 (ISDP…EDII), and 5600–5638 (HDKDEEQPEKPQQQEIHQQPEKPQQPEKPQELQSTETPG). Composition is skewed to low complexity over residues 1118–1134 (NNSNNNNNNNNNNNNNK), 1831–1846 (SSSSSSYSGGGSSINN), 2048–2096 (QQLQ…QQQQ), 3353–3392 (SNNNNNNNNNDNSGNNSGNEIDGSSNGDNNNNNNNNNNSG), and 5135–5153 (NNNNNNNNNNNNNNNNNNN). The segment covering 5496–5573 (DNEEEEEDDD…EDEDEDEDII (78 aa)) has biased composition (acidic residues). A compositionally biased stretch (basic and acidic residues) spans 5617–5629 (QQPEKPQQPEKPQ).

This is an uncharacterized protein from Dictyostelium discoideum (Social amoeba).